A 610-amino-acid polypeptide reads, in one-letter code: Elongation factor 4 (610 aa).

In terms of domain architecture, tr-type G spans 11-193 (EKIRNFSIIA…QIVEKVPAPT (183 aa)). GTP-binding positions include 23–28 (DHGKST) and 140–143 (NKID).

It belongs to the TRAFAC class translation factor GTPase superfamily. Classic translation factor GTPase family. LepA subfamily.

It localises to the cell membrane. The catalysed reaction is GTP + H2O = GDP + phosphate + H(+). Its function is as follows. Required for accurate and efficient protein synthesis under certain stress conditions. May act as a fidelity factor of the translation reaction, by catalyzing a one-codon backward translocation of tRNAs on improperly translocated ribosomes. Back-translocation proceeds from a post-translocation (POST) complex to a pre-translocation (PRE) complex, thus giving elongation factor G a second chance to translocate the tRNAs correctly. Binds to ribosomes in a GTP-dependent manner. The sequence is that of Elongation factor 4 from Streptococcus pyogenes serotype M2 (strain MGAS10270).